The primary structure comprises 485 residues: NADH-quinone oxidoreductase subunit N (485 aa).

14 helical membrane passes run 8–28, 35–55, 78–98, 104–124, 125–145, 159–179, 203–223, 235–255, 271–291, 297–317, 327–347, 374–394, 408–427, and 449–469; these read LIAL…MLGI, FINA…LYFV, GLVI…LVGY, EFYL…SANH, LASL…LVGY, YMLL…LLYA, VLAG…LVPF, PAPV…AVVM, MVLS…AISQ, LLGY…IAVQ, GVYL…VSLM, AVMT…GFIG, WWLT…YYLR, and ALTA…LLGV.

The protein belongs to the complex I subunit 2 family. In terms of assembly, NDH-1 is composed of 13 different subunits. Subunits NuoA, H, J, K, L, M, N constitute the membrane sector of the complex.

It is found in the cell inner membrane. The catalysed reaction is a quinone + NADH + 5 H(+)(in) = a quinol + NAD(+) + 4 H(+)(out). Its function is as follows. NDH-1 shuttles electrons from NADH, via FMN and iron-sulfur (Fe-S) centers, to quinones in the respiratory chain. The immediate electron acceptor for the enzyme in this species is believed to be ubiquinone. Couples the redox reaction to proton translocation (for every two electrons transferred, four hydrogen ions are translocated across the cytoplasmic membrane), and thus conserves the redox energy in a proton gradient. The protein is NADH-quinone oxidoreductase subunit N of Serratia proteamaculans (strain 568).